We begin with the raw amino-acid sequence, 460 residues long: MTLRIFDTGTRTLRDFKPVQPGHASVYLCGATPQSSPHIGHVRSAVAFDILRRWLMAKGLDVAFVRNVTDIDDKILTKASENGRPWWEWVSTYEREFTWTYNTLGVLPPSTEPRATGHVTQMIEYMQRLIDNGFAYAVDGSVYFDVAAWSKAEGSDYGSLSGNRVEDMEQGEPDNFGKRGPQDFALWKAAKPGEPSWPTPWGDGRPGWHLECSAMATYYLGEQFDIHCGGLDLQFPHHENEIAQAHAAGDKFANYWMHNHWVTMAGEKMSKSLGNVLAVPEMLKQVRPVELRYYLGSAHYRSVLEYSESALSEAAVGYRRIESFLERVGDVEVGEWTPGFEAAMDEDIAVPKALAEIHNAVREGNAALDKGDREAAKKLASSVRAMTGVLGFDPVEWGSDAGADGKADKALDVLISSELERRATARAEKNWTVADEVRDRLADAGIEVVDTADGATWKLQ.

Cys-29 lines the Zn(2+) pocket. The short motif at Ala-31–His-41 is the 'HIGH' region element. The Zn(2+) site is built by Cys-212, His-237, and Glu-241. Positions Lys-268–Ser-272 match the 'KMSKS' region motif. Lys-271 is a binding site for ATP.

Belongs to the class-I aminoacyl-tRNA synthetase family. As to quaternary structure, monomer. The cofactor is Zn(2+).

The protein resides in the cytoplasm. It catalyses the reaction tRNA(Cys) + L-cysteine + ATP = L-cysteinyl-tRNA(Cys) + AMP + diphosphate. In Corynebacterium glutamicum (strain R), this protein is Cysteine--tRNA ligase.